Reading from the N-terminus, the 23-residue chain is Conolysin-Mt1 (23 aa).

The residue at position 22 (Ser22) is a Serine amide.

As to expression, expressed by the venom duct.

It localises to the secreted. This cytolytic peptide has ability to disrupt the integrity of cell membranes from both prokaryotes and eukaryotes. It permeabilizes both negatively charged prokaryotic (PE:PG) and zwitterionic eukaryotic (PC:cholesterol) model membranes. It has potent hemolytic activity on human erythrocytes and exhibits low antimicrobial activity against the Gram-negative bacterium E.coli (MIC&gt;50 uM) and the Gram-positive bacterium S.aureus (MIC=25-50 uM). Intracranial injection causes mice to shuffle backward until the encounter an obstacle, at which time the mouse jump into the air. The backward shuffle is reminiscent to the signature dance 'moonwalk' that gained widespread popularity after being performed by Michael Jackson. This chain is Conolysin-Mt1, found in Conus mustelinus (Weasel cone).